Here is a 482-residue protein sequence, read N- to C-terminus: tRNA sulfurtransferase (482 aa).

Residues 61-165 form the THUMP domain; it reads LAIRDALTRI…DDRLLLIKGR (105 aa). ATP contacts are provided by residues 183–184, lysine 265, glycine 287, and glutamine 296; that span reads LI. Cysteine 344 and cysteine 456 are oxidised to a cystine. One can recognise a Rhodanese domain in the interval 404-482; that stretch reads FGANDVILDI…GFANVKVYRP (79 aa). Cysteine 456 serves as the catalytic Cysteine persulfide intermediate.

It belongs to the ThiI family.

It is found in the cytoplasm. It carries out the reaction [ThiI sulfur-carrier protein]-S-sulfanyl-L-cysteine + a uridine in tRNA + 2 reduced [2Fe-2S]-[ferredoxin] + ATP + H(+) = [ThiI sulfur-carrier protein]-L-cysteine + a 4-thiouridine in tRNA + 2 oxidized [2Fe-2S]-[ferredoxin] + AMP + diphosphate. The catalysed reaction is [ThiS sulfur-carrier protein]-C-terminal Gly-Gly-AMP + S-sulfanyl-L-cysteinyl-[cysteine desulfurase] + AH2 = [ThiS sulfur-carrier protein]-C-terminal-Gly-aminoethanethioate + L-cysteinyl-[cysteine desulfurase] + A + AMP + 2 H(+). Its pathway is cofactor biosynthesis; thiamine diphosphate biosynthesis. In terms of biological role, catalyzes the ATP-dependent transfer of a sulfur to tRNA to produce 4-thiouridine in position 8 of tRNAs, which functions as a near-UV photosensor. Also catalyzes the transfer of sulfur to the sulfur carrier protein ThiS, forming ThiS-thiocarboxylate. This is a step in the synthesis of thiazole, in the thiamine biosynthesis pathway. The sulfur is donated as persulfide by IscS. The sequence is that of tRNA sulfurtransferase from Salmonella agona (strain SL483).